The chain runs to 189 residues: Ribosome maturation factor RimP (189 aa).

The protein belongs to the RimP family.

It localises to the cytoplasm. In terms of biological role, required for maturation of 30S ribosomal subunits. In Corynebacterium kroppenstedtii (strain DSM 44385 / JCM 11950 / CIP 105744 / CCUG 35717), this protein is Ribosome maturation factor RimP.